Reading from the N-terminus, the 87-residue chain is uncharacterized protein (87 aa).

The 84-residue stretch at Ser-4–Ile-87 folds into the 2Fe-2S ferredoxin-type domain. Residues Cys-39, Cys-44, Cys-47, and Cys-75 each coordinate [2Fe-2S] cluster.

It depends on [2Fe-2S] cluster as a cofactor.

This is an uncharacterized protein from Buchnera aphidicola subsp. Baizongia pistaciae (strain Bp).